The sequence spans 268 residues: UDP-2,3-diacylglucosamine hydrolase (268 aa).

The Mn(2+) site is built by D25, H27, D58, N97, and H132. 97–98 (NR) provides a ligand contact to substrate. Substrate is bound by residues D140, S178, E191, and H222. Mn(2+) contacts are provided by H222 and H224.

It belongs to the LpxH family. Requires Mn(2+) as cofactor.

It localises to the cell inner membrane. The catalysed reaction is UDP-2-N,3-O-bis[(3R)-3-hydroxytetradecanoyl]-alpha-D-glucosamine + H2O = 2-N,3-O-bis[(3R)-3-hydroxytetradecanoyl]-alpha-D-glucosaminyl 1-phosphate + UMP + 2 H(+). It functions in the pathway glycolipid biosynthesis; lipid IV(A) biosynthesis; lipid IV(A) from (3R)-3-hydroxytetradecanoyl-[acyl-carrier-protein] and UDP-N-acetyl-alpha-D-glucosamine: step 4/6. Functionally, hydrolyzes the pyrophosphate bond of UDP-2,3-diacylglucosamine to yield 2,3-diacylglucosamine 1-phosphate (lipid X) and UMP by catalyzing the attack of water at the alpha-P atom. Involved in the biosynthesis of lipid A, a phosphorylated glycolipid that anchors the lipopolysaccharide to the outer membrane of the cell. The protein is UDP-2,3-diacylglucosamine hydrolase of Ralstonia nicotianae (strain ATCC BAA-1114 / GMI1000) (Ralstonia solanacearum).